The chain runs to 1220 residues: MFVHRLWTLAFPFLVEISKASQLENIKSLLDIEDNVLPNLNISQNNSNAVQILGGVDALSFYEYTGQQNFTKEIGPETSSHGLVYYSNNTYIQLEDASDDTRIDKITPFGVDSFILSGSGTINNISVGNQILYNLSTLSMTPIFNQSLGAVQAVLADNSSIYFGGNFSYNNGSMTGYSALIWDSISNTTQLLPFGGFGENSSVNSIVKLNNDNILFAGQFYTLDDPSALISSSNNGTNSTSSLNATTLELGQRIPLRYASWDSQGSTTFASDSLVCPNTNEDAWLYPDTSGSLVCNLPYEVSPTKIRLYNSQRSDSEISVFQILTDPSSSIMNLTYLDPLSGELKNCGEFCPLYSRATLLSASQNVSSSMDMITFIDNNKTDVKWTSDFQDFAFVNELPVSSLKFVALNSYGGSVGLSGLELYQDTFSTYANDSLNEYGCSALTNDSSSSTLSSNDWYNGLTGESYIAAKYVPDQNEPIPRVKFYPNIIHPGHYTINMYTPGCLQDNTCSARGIVNVTMWNQQNNTIMKTYLIYQNNDNLKYDQIYSGYLDFSPEIVLEYVSGIYTTNTATVVVADQVNVITVSLDAFNTLSDSSNAKKETLLNGILQYQKSNFTSTRLNETKVGNTTLNLFPVKNYPKNSSLYADIYDNKLVIGGVSNRISIVDLNDDFEVTSSKNQTIQGDVHGITKTNQGLLIFGDILSSNNQSAVFLFNGSFENVFNQSRTVNSALNISLANNDFIVLDNDYVVNASSNALIRNSSSFSLSLWAAGNNGDGDVLFSGAVSHMQYGNLNGSVRFLNENEIEPLNLEGGIVPYLGAYLNESATAYAYEVDSLNKIYFSNEVYPSWNWSSGITQMLYADNQTLLAVSAGSSTTAELSIFDLRNLTMIANETLGSNARINALVNFEKNCSMLVGGDFQMTEPNCTGLCLYNYESKTWSTFLNNTIFGEITQLSFTNSSELIISGLFETKEYQSIRLGSFNLTNSTMIPLLSGSEGKLNSFTVTEDSIVAWNDTSLFIYRNQEWNITSLPGNASSISSVSAIYTDIESNTLNKRGINNVNNGSILLLNGNFNISQYGYLQSLLFDFQKWTPYFISETTNTSNYNPIIFINRDVSTEFNSQSPLANVNITVTSPQSTSSQPPSSSASSESKSKSKKKKIGRGFVVLIGLALALGTVSVLGIAGVILAYVFKDPEGDYKPIKPRIDENEMLDTVPPEKLMKFV.

The signal sequence occupies residues 1–20 (MFVHRLWTLAFPFLVEISKA). Over 21–1162 (SQLENIKSLL…KKKKIGRGFV (1142 aa)) the chain is Extracellular. Asparagine 41, asparagine 45, asparagine 69, asparagine 88, asparagine 124, asparagine 134, asparagine 145, asparagine 158, asparagine 166, asparagine 171, asparagine 187, asparagine 200, asparagine 235, asparagine 238, asparagine 244, asparagine 333, asparagine 365, asparagine 379, asparagine 432, asparagine 445, asparagine 516, asparagine 524, asparagine 613, asparagine 620, asparagine 626, asparagine 640, asparagine 677, asparagine 705, asparagine 713, asparagine 721, asparagine 731, asparagine 749, asparagine 758, asparagine 792, asparagine 821, asparagine 848, asparagine 861, asparagine 884, asparagine 890, asparagine 908, asparagine 923, asparagine 942, asparagine 956, asparagine 980, asparagine 983, asparagine 1011, asparagine 1024, asparagine 1031, asparagine 1060, asparagine 1071, asparagine 1098, and asparagine 1126 each carry an N-linked (GlcNAc...) asparagine glycan. Residues 1129 to 1151 (VTSPQSTSSQPPSSSASSESKSK) are disordered. The segment covering 1131–1147 (SPQSTSSQPPSSSASSE) has biased composition (low complexity). A helical membrane pass occupies residues 1163 to 1183 (VLIGLALALGTVSVLGIAGVI). Over 1184-1220 (LAYVFKDPEGDYKPIKPRIDENEMLDTVPPEKLMKFV) the chain is Cytoplasmic.

Belongs to the RAX2 family. As to quaternary structure, forms an heterodimeric complex with RAX1. Interacts with BUD8 at the proximal or distal pole in unbudded cells. Interacts with BUD9 at the birth scar in budded mother cells. Post-translationally, glycosylated.

It localises to the cell membrane. Its subcellular location is the bud neck. The protein localises to the bud tip. In terms of biological role, required for the maintenance of the bipolar budding pattern. Involved in selecting bud sites at both the distal and proximal poles of daughter cells as well as near previously used division sites on mother cells. The RAX1-RAX2 complex performs the asymmetric localization of the two cortical landmarks, BUD8 and BUD9, at the distal and proximal poles, respectively. This chain is Bud site selection protein RAX2 (RAX2), found in Saccharomyces cerevisiae (strain ATCC 204508 / S288c) (Baker's yeast).